The primary structure comprises 137 residues: Large ribosomal subunit protein bL17 (137 aa).

Belongs to the bacterial ribosomal protein bL17 family. In terms of assembly, part of the 50S ribosomal subunit. Contacts protein L32.

This is Large ribosomal subunit protein bL17 from Rickettsia typhi (strain ATCC VR-144 / Wilmington).